Reading from the N-terminus, the 204-residue chain is Photosynthetic NDH subunit of subcomplex B 3, chloroplastic (204 aa).

Disordered stretches follow at residues 1–24 (MGSV…FSHK) and 45–68 (KTVR…DEPP). The N-terminal 48 residues, 1 to 48 (MGSVQLSGSGLVASLPPNHSFSHKTKLNKPNSYFFRSKHNAARTKTVR), are a transit peptide targeting the chloroplast. Residues 76-180 (HSVLLPDGTP…STGLVVIQQL (105 aa)) form the 2Fe-2S ferredoxin-type domain. The [2Fe-2S] cluster site is built by Cys-120, Cys-126, Cys-129, and Cys-162.

In terms of assembly, part of the chloroplast NDH complex, composed of a mixture of chloroplast and nucleus encoded subunits. Component of the NDH subcomplex B, at least composed of PnsB1, PnsB2, PnsB3, PnsB4 and PnsB5.

The protein resides in the plastid. Its subcellular location is the chloroplast thylakoid membrane. Its function is as follows. NDH shuttles electrons from NAD(P)H:plastoquinone, via FMN and iron-sulfur (Fe-S) centers, to quinones in the photosynthetic chain and possibly in a chloroplast respiratory chain. The immediate electron acceptor for the enzyme in this species is believed to be plastoquinone. Couples the redox reaction to proton translocation, and thus conserves the redox energy in a proton gradient. The protein is Photosynthetic NDH subunit of subcomplex B 3, chloroplastic of Arabidopsis thaliana (Mouse-ear cress).